The primary structure comprises 283 residues: ATP phosphoribosyltransferase (283 aa).

The protein belongs to the ATP phosphoribosyltransferase family. Long subfamily. Mg(2+) serves as cofactor.

It is found in the cytoplasm. The catalysed reaction is 1-(5-phospho-beta-D-ribosyl)-ATP + diphosphate = 5-phospho-alpha-D-ribose 1-diphosphate + ATP. Its pathway is amino-acid biosynthesis; L-histidine biosynthesis; L-histidine from 5-phospho-alpha-D-ribose 1-diphosphate: step 1/9. With respect to regulation, feedback inhibited by histidine. Catalyzes the condensation of ATP and 5-phosphoribose 1-diphosphate to form N'-(5'-phosphoribosyl)-ATP (PR-ATP). Has a crucial role in the pathway because the rate of histidine biosynthesis seems to be controlled primarily by regulation of HisG enzymatic activity. The polypeptide is ATP phosphoribosyltransferase (Phocaeicola vulgatus (strain ATCC 8482 / DSM 1447 / JCM 5826 / CCUG 4940 / NBRC 14291 / NCTC 11154) (Bacteroides vulgatus)).